A 135-amino-acid chain; its full sequence is Large ribosomal subunit protein uL16 (135 aa).

This sequence belongs to the universal ribosomal protein uL16 family. Part of the 50S ribosomal subunit.

In terms of biological role, binds 23S rRNA and is also seen to make contacts with the A and possibly P site tRNAs. This Carsonella ruddii (strain PV) protein is Large ribosomal subunit protein uL16 (rplP).